The following is a 202-amino-acid chain: uncharacterized protein (202 aa).

The interval 178–202 is disordered; the sequence is VCSSEDSEADRYSDYGWGGPSSPFN.

This is an uncharacterized protein from Homo sapiens (Human).